Here is a 741-residue protein sequence, read N- to C-terminus: uncharacterized protein (741 aa).

An N-terminal signal peptide occupies residues 1-22; the sequence is MKSVKIIIILALALLIQISHIA.

This is an uncharacterized protein from Archaeoglobus fulgidus (strain ATCC 49558 / DSM 4304 / JCM 9628 / NBRC 100126 / VC-16).